Reading from the N-terminus, the 503-residue chain is ATP synthase subunit alpha (503 aa).

170-177 (GDRKTGKT) is an ATP binding site.

Belongs to the ATPase alpha/beta chains family. As to quaternary structure, F-type ATPases have 2 components, CF(1) - the catalytic core - and CF(0) - the membrane proton channel. CF(1) has five subunits: alpha(3), beta(3), gamma(1), delta(1), epsilon(1). CF(0) has four main subunits: a(1), b(1), b'(1) and c(9-12).

Its subcellular location is the cellular thylakoid membrane. It carries out the reaction ATP + H2O + 4 H(+)(in) = ADP + phosphate + 5 H(+)(out). In terms of biological role, produces ATP from ADP in the presence of a proton gradient across the membrane. The alpha chain is a regulatory subunit. This is ATP synthase subunit alpha from Synechocystis sp. (strain ATCC 27184 / PCC 6803 / Kazusa).